Reading from the N-terminus, the 529-residue chain is Glycerol kinase 5 (529 aa).

T22 and T23 together coordinate ATP. Glycerol contacts are provided by R92, D269, and Q270. Positions 291, 334, and 434 each coordinate ATP.

The protein belongs to the FGGY kinase family.

It localises to the cytoplasm. It catalyses the reaction glycerol + ATP = sn-glycerol 3-phosphate + ADP + H(+). It functions in the pathway polyol metabolism; glycerol degradation via glycerol kinase pathway; sn-glycerol 3-phosphate from glycerol: step 1/1. Functionally, skin-specific kinase that plays a key role in glycerol metabolism, catalyzing its phosphorylation to produce sn-glycerol 3-phosphate. Involved in skin-specific regulation of sterol regulatory element-binding protein (SREBP) processing and lipid biosynthesis. This chain is Glycerol kinase 5 (gk5), found in Danio rerio (Zebrafish).